The primary structure comprises 237 residues: Mannose-specific lectin alpha chain (237 aa).

2 residues coordinate Mn(2+): Glu-8 and Asp-10. Asp-10, Tyr-12, Asn-14, and Asp-19 together coordinate Ca(2+). Tyr-12 is a binding site for a carbohydrate. 3 residues coordinate Mn(2+): Asp-19, His-24, and Ser-34. Residue 99–100 coordinates a carbohydrate; the sequence is LY. Residue Asp-208 coordinates Ca(2+). Arg-228 provides a ligand contact to a carbohydrate.

This sequence belongs to the leguminous lectin family. As to quaternary structure, homotetramer. Post-translationally, the beta and gamma chains are produced by partial proteolytic processing of the lectin alpha chain by an asparaginyl endopeptidase.

In terms of biological role, D-mannose/D-glucose-binding lectin. Also binds derivatives of glucose and mannose such as more complex glycans. This is Mannose-specific lectin alpha chain from Cymbosema roseum (Dioclea purpurea).